The following is a 79-amino-acid chain: UPF0150 protein ssr1765 (79 aa).

It belongs to the UPF0150 family.

The protein is UPF0150 protein ssr1765 of Synechocystis sp. (strain ATCC 27184 / PCC 6803 / Kazusa).